Consider the following 209-residue polypeptide: Orotate phosphoribosyltransferase (209 aa).

5-phospho-alpha-D-ribose 1-diphosphate contacts are provided by residues R96, K100, H102, and 122 to 130 (EDLISTGGS). S126 is a binding site for orotate.

This sequence belongs to the purine/pyrimidine phosphoribosyltransferase family. PyrE subfamily. As to quaternary structure, homodimer. The cofactor is Mg(2+).

The enzyme catalyses orotidine 5'-phosphate + diphosphate = orotate + 5-phospho-alpha-D-ribose 1-diphosphate. It functions in the pathway pyrimidine metabolism; UMP biosynthesis via de novo pathway; UMP from orotate: step 1/2. In terms of biological role, catalyzes the transfer of a ribosyl phosphate group from 5-phosphoribose 1-diphosphate to orotate, leading to the formation of orotidine monophosphate (OMP). The polypeptide is Orotate phosphoribosyltransferase (Streptococcus pyogenes serotype M12 (strain MGAS2096)).